The sequence spans 581 residues: Arginine--tRNA ligase (581 aa).

Positions 122 to 132 (PNVAKPMHVGH) match the 'HIGH' region motif.

This sequence belongs to the class-I aminoacyl-tRNA synthetase family. As to quaternary structure, monomer.

It is found in the cytoplasm. The catalysed reaction is tRNA(Arg) + L-arginine + ATP = L-arginyl-tRNA(Arg) + AMP + diphosphate. This Francisella tularensis subsp. tularensis (strain WY96-3418) protein is Arginine--tRNA ligase.